Consider the following 237-residue polypeptide: Pheromone-regulated membrane protein 8 (237 aa).

The Cytoplasmic segment spans residues 1–47; the sequence is MQTPSENTNAKSDSLDEPGAYLIEENVALPKDIFHSYLSYWIYEAAH. The helical transmembrane segment at 48-68 threads the bilayer; that stretch reads CTPVMLLSLVIGVLISIIILF. The Extracellular portion of the chain corresponds to 69–74; the sequence is HDNENC. Residues 75–95 traverse the membrane as a helical segment; sequence VGVSVGFLLIFSGILVIVLIL. Residues 96–237 are Cytoplasmic-facing; it reads RFGPQISDED…QEYPGVDEFF (142 aa). The interval 174–201 is disordered; the sequence is SSASNVKDAQSNDETAGTPNEAAESSSF. The tract at residues 236 to 237 is COPII binding; that stretch reads FF.

It belongs to the DUP/COS family. As to quaternary structure, interacts with PRM9. Binds to SEC23/24 of COPII coated vesicles.

The protein resides in the membrane. Its subcellular location is the endoplasmic reticulum. May be involved in endoplasmic reticulum exit trafficking of proteins. This Saccharomyces cerevisiae (strain ATCC 204508 / S288c) (Baker's yeast) protein is Pheromone-regulated membrane protein 8 (PRM8).